The following is a 343-amino-acid chain: Phenylalanine--tRNA ligase alpha subunit (343 aa).

Residue glutamate 268 participates in Mg(2+) binding.

The protein belongs to the class-II aminoacyl-tRNA synthetase family. Phe-tRNA synthetase alpha subunit type 1 subfamily. Tetramer of two alpha and two beta subunits. Requires Mg(2+) as cofactor.

Its subcellular location is the cytoplasm. The enzyme catalyses tRNA(Phe) + L-phenylalanine + ATP = L-phenylalanyl-tRNA(Phe) + AMP + diphosphate + H(+). The chain is Phenylalanine--tRNA ligase alpha subunit from Cupriavidus taiwanensis (strain DSM 17343 / BCRC 17206 / CCUG 44338 / CIP 107171 / LMG 19424 / R1) (Ralstonia taiwanensis (strain LMG 19424)).